A 389-amino-acid chain; its full sequence is Succinate--CoA ligase [ADP-forming] subunit beta (389 aa).

Residues 9-244 (KQLFADYGLP…ETQEDPREVE (236 aa)) form the ATP-grasp domain. ATP is bound by residues K46, 53–55 (GRG), E99, G102, and E107. Mg(2+)-binding residues include N199 and D213. Residues N264 and 321–323 (GIV) contribute to the substrate site.

Belongs to the succinate/malate CoA ligase beta subunit family. In terms of assembly, heterotetramer of two alpha and two beta subunits. Requires Mg(2+) as cofactor.

It carries out the reaction succinate + ATP + CoA = succinyl-CoA + ADP + phosphate. The enzyme catalyses GTP + succinate + CoA = succinyl-CoA + GDP + phosphate. The protein operates within carbohydrate metabolism; tricarboxylic acid cycle; succinate from succinyl-CoA (ligase route): step 1/1. Functionally, succinyl-CoA synthetase functions in the citric acid cycle (TCA), coupling the hydrolysis of succinyl-CoA to the synthesis of either ATP or GTP and thus represents the only step of substrate-level phosphorylation in the TCA. The beta subunit provides nucleotide specificity of the enzyme and binds the substrate succinate, while the binding sites for coenzyme A and phosphate are found in the alpha subunit. The sequence is that of Succinate--CoA ligase [ADP-forming] subunit beta from Tolumonas auensis (strain DSM 9187 / NBRC 110442 / TA 4).